The sequence spans 177 residues: ATP synthase subunit delta (177 aa).

Belongs to the ATPase delta chain family. In terms of assembly, F-type ATPases have 2 components, F(1) - the catalytic core - and F(0) - the membrane proton channel. F(1) has five subunits: alpha(3), beta(3), gamma(1), delta(1), epsilon(1). F(0) has three main subunits: a(1), b(2) and c(10-14). The alpha and beta chains form an alternating ring which encloses part of the gamma chain. F(1) is attached to F(0) by a central stalk formed by the gamma and epsilon chains, while a peripheral stalk is formed by the delta and b chains.

It is found in the cell inner membrane. Its function is as follows. F(1)F(0) ATP synthase produces ATP from ADP in the presence of a proton or sodium gradient. F-type ATPases consist of two structural domains, F(1) containing the extramembraneous catalytic core and F(0) containing the membrane proton channel, linked together by a central stalk and a peripheral stalk. During catalysis, ATP synthesis in the catalytic domain of F(1) is coupled via a rotary mechanism of the central stalk subunits to proton translocation. In terms of biological role, this protein is part of the stalk that links CF(0) to CF(1). It either transmits conformational changes from CF(0) to CF(1) or is implicated in proton conduction. This chain is ATP synthase subunit delta, found in Sodalis glossinidius (strain morsitans).